The following is a 223-amino-acid chain: Deoxyribose-phosphate aldolase (223 aa).

The active-site Proton donor/acceptor is aspartate 89. The active-site Schiff-base intermediate with acetaldehyde is lysine 152. The Proton donor/acceptor role is filled by lysine 181.

This sequence belongs to the DeoC/FbaB aldolase family. DeoC type 1 subfamily.

It localises to the cytoplasm. The enzyme catalyses 2-deoxy-D-ribose 5-phosphate = D-glyceraldehyde 3-phosphate + acetaldehyde. Its pathway is carbohydrate degradation; 2-deoxy-D-ribose 1-phosphate degradation; D-glyceraldehyde 3-phosphate and acetaldehyde from 2-deoxy-alpha-D-ribose 1-phosphate: step 2/2. In terms of biological role, catalyzes a reversible aldol reaction between acetaldehyde and D-glyceraldehyde 3-phosphate to generate 2-deoxy-D-ribose 5-phosphate. The polypeptide is Deoxyribose-phosphate aldolase (Listeria monocytogenes serovar 1/2a (strain ATCC BAA-679 / EGD-e)).